A 135-amino-acid chain; its full sequence is Interleukin-4 (135 aa).

Positions 1-24 (MGLTSQLIPVLVCLLVCTSHFVHG) are cleaved as a signal peptide. 3 cysteine pairs are disulfide-bonded: C27/C135, C48/C85, and C70/C105. N-linked (GlcNAc...) asparagine glycosylation is present at N62.

The protein belongs to the IL-4/IL-13 family.

It localises to the secreted. Its function is as follows. Participates in at least several B-cell activation processes as well as of other cell types. It is a costimulator of DNA-synthesis. It induces the expression of class II MHC molecules on resting B-cells. It enhances both secretion and cell surface expression of IgE and IgG1. It also regulates the expression of the low affinity Fc receptor for IgE (CD23) on both lymphocytes and monocytes. Positively regulates IL31RA expression in macrophages. Stimulates autophagy in dendritic cells by interfering with mTORC1 signaling and through the induction of RUFY4. The sequence is that of Interleukin-4 (IL4) from Bos taurus (Bovine).